We begin with the raw amino-acid sequence, 340 residues long: MNAVSMTVIGAGSYGTALAIAFARNGHHVLLWGYNPQHVRELQIHRCNQAFLPDVQFPDNLSPEASLETAITASRNILIAVPSHVFHQVLYNIQPYLNQHSRIIWATKGLEHGTGRLLQEVAREILGDKIPLAIFSGPTFAKELAIGLPTAITVAASNAEFSEELQQLFHCDKSFRVYKNPDMIGVQLGGVIKNVIAIGAGISDGMGFGANARIALITRGLAEISRLGIAMGAELSTFMGMTGLGDLVLTCTDNQSRNRRFGILLGQGMDIEEAEKQIGQIVEGYLNTKEVRMLARRIGVEMPITEQIYHVLYSGKSVVEAANTLLSRTLKDEIHDKVCF.

S13, Y14, and K108 together coordinate NADPH. The sn-glycerol 3-phosphate site is built by K108, G137, and T139. A141 is an NADPH binding site. K193, D246, S256, R257, and N258 together coordinate sn-glycerol 3-phosphate. Residue K193 is the Proton acceptor of the active site. R257 serves as a coordination point for NADPH. NADPH contacts are provided by I281 and E283.

Belongs to the NAD-dependent glycerol-3-phosphate dehydrogenase family.

It localises to the cytoplasm. The enzyme catalyses sn-glycerol 3-phosphate + NAD(+) = dihydroxyacetone phosphate + NADH + H(+). It carries out the reaction sn-glycerol 3-phosphate + NADP(+) = dihydroxyacetone phosphate + NADPH + H(+). The protein operates within membrane lipid metabolism; glycerophospholipid metabolism. Functionally, catalyzes the reduction of the glycolytic intermediate dihydroxyacetone phosphate (DHAP) to sn-glycerol 3-phosphate (G3P), the key precursor for phospholipid synthesis. This is Glycerol-3-phosphate dehydrogenase [NAD(P)+] from Bartonella quintana (strain Toulouse) (Rochalimaea quintana).